We begin with the raw amino-acid sequence, 79 residues long: Small ribosomal subunit protein bS18 (79 aa).

This sequence belongs to the bacterial ribosomal protein bS18 family. In terms of assembly, part of the 30S ribosomal subunit. Forms a tight heterodimer with protein bS6.

Its function is as follows. Binds as a heterodimer with protein bS6 to the central domain of the 16S rRNA, where it helps stabilize the platform of the 30S subunit. The protein is Small ribosomal subunit protein bS18 of Listeria innocua serovar 6a (strain ATCC BAA-680 / CLIP 11262).